Consider the following 215-residue polypeptide: Pyridoxine/pyridoxamine 5'-phosphate oxidase (215 aa).

Substrate contacts are provided by residues Arg9 to Tyr12 and Lys69. FMN contacts are provided by residues Arg64 to Lys69, Phe79 to Thr80, Lys86, and Gln108. Tyr126, Arg130, and Ser134 together coordinate substrate. Residues Gln143–Ser144 and Trp188 contribute to the FMN site. Arg194 to His196 contacts substrate. An FMN-binding site is contributed by Arg198.

The protein belongs to the pyridoxamine 5'-phosphate oxidase family. In terms of assembly, homodimer. Requires FMN as cofactor.

The enzyme catalyses pyridoxamine 5'-phosphate + O2 + H2O = pyridoxal 5'-phosphate + H2O2 + NH4(+). It carries out the reaction pyridoxine 5'-phosphate + O2 = pyridoxal 5'-phosphate + H2O2. The protein operates within cofactor metabolism; pyridoxal 5'-phosphate salvage; pyridoxal 5'-phosphate from pyridoxamine 5'-phosphate: step 1/1. Its pathway is cofactor metabolism; pyridoxal 5'-phosphate salvage; pyridoxal 5'-phosphate from pyridoxine 5'-phosphate: step 1/1. In terms of biological role, catalyzes the oxidation of either pyridoxine 5'-phosphate (PNP) or pyridoxamine 5'-phosphate (PMP) into pyridoxal 5'-phosphate (PLP). This Pseudomonas putida (strain GB-1) protein is Pyridoxine/pyridoxamine 5'-phosphate oxidase.